A 337-amino-acid polypeptide reads, in one-letter code: Large ribosomal subunit protein uL3 (337 aa).

The interval 1–29 (MARHHQPRKGSVAFSPRKRAARETPRVKS) is disordered.

It belongs to the universal ribosomal protein uL3 family. As to quaternary structure, part of the 50S ribosomal subunit. Forms a cluster with proteins L14 and L24e.

Functionally, one of the primary rRNA binding proteins, it binds directly near the 3'-end of the 23S rRNA, where it nucleates assembly of the 50S subunit. The chain is Large ribosomal subunit protein uL3 from Methanothermobacter thermautotrophicus (strain ATCC 29096 / DSM 1053 / JCM 10044 / NBRC 100330 / Delta H) (Methanobacterium thermoautotrophicum).